Consider the following 422-residue polypeptide: S-adenosylmethionine synthase (422 aa).

Residue H15 participates in ATP binding. A Mg(2+)-binding site is contributed by D17. Position 43 (E43) interacts with K(+). E56 and Q99 together coordinate L-methionine. The tract at residues 99-109 (QSPDISRGVTE) is flexible loop. Residues 166 to 168 (DGK), 232 to 233 (RF), D241, 247 to 248 (RK), A264, and K268 contribute to the ATP site. D241 is a binding site for L-methionine. Position 272 (K272) interacts with L-methionine. Residues 390-422 (AVPATTNGAGSKNGSGSKKEPKRKGKKETGAQA) are disordered.

Belongs to the AdoMet synthase family. As to quaternary structure, homotetramer; dimer of dimers. Mg(2+) is required as a cofactor. The cofactor is K(+).

The protein resides in the cytoplasm. The enzyme catalyses L-methionine + ATP + H2O = S-adenosyl-L-methionine + phosphate + diphosphate. The protein operates within amino-acid biosynthesis; S-adenosyl-L-methionine biosynthesis; S-adenosyl-L-methionine from L-methionine: step 1/1. Its function is as follows. Catalyzes the formation of S-adenosylmethionine (AdoMet) from methionine and ATP. The overall synthetic reaction is composed of two sequential steps, AdoMet formation and the subsequent tripolyphosphate hydrolysis which occurs prior to release of AdoMet from the enzyme. The polypeptide is S-adenosylmethionine synthase (Sorangium cellulosum (strain So ce56) (Polyangium cellulosum (strain So ce56))).